The primary structure comprises 484 residues: ATP-dependent rRNA helicase RRP3 (484 aa).

Over residues 1-10 (MAIVGSNSVS) the composition is skewed to polar residues. The interval 1-61 (MAIVGSNSVS…SSQKSKNIVE (61 aa)) is disordered. A compositionally biased stretch (basic and acidic residues) spans 18–54 (RNDARDLAEKIKRNALKKQEQDKKQQLEEESKPESSQ). The Q motif motif lies at 71-99 (STFSELKLVPELLEAIQQMKFSKPTPIQS). One can recognise a Helicase ATP-binding domain in the interval 102–273 (IPHALEGKDI…RASLHNPVRV (172 aa)). 115-122 (AQTGSGKT) is a binding site for ATP. Positions 221–224 (DEAD) match the DEAD box motif. Positions 300 to 444 (YLIHLLNEFV…KDPSPPKAML (145 aa)) constitute a Helicase C-terminal domain. Residues 460 to 484 (RQTKEFHEKTRRGRRGKDDKDREEH) form a disordered region. Residues 475–484 (GKDDKDREEH) show a composition bias toward basic and acidic residues.

Belongs to the DEAD box helicase family. DDX47/RRP3 subfamily. As to quaternary structure, interacts with the SSU processome.

The protein resides in the nucleus. The catalysed reaction is ATP + H2O = ADP + phosphate + H(+). ATP-dependent rRNA helicase required for pre-ribosomal RNA processing. Involved in the maturation of the 35S-pre-rRNA and to its cleavage to mature 18S rRNA. This Scheffersomyces stipitis (strain ATCC 58785 / CBS 6054 / NBRC 10063 / NRRL Y-11545) (Yeast) protein is ATP-dependent rRNA helicase RRP3.